Consider the following 225-residue polypeptide: NAD(P)H-hydrate epimerase (225 aa).

The 201-residue stretch at 9 to 209 (MQTIDNYTVE…DIGLLTPQDF (201 aa)) folds into the YjeF N-terminal domain. 57–61 (NNGAD) contacts (6S)-NADPHX. Residues asparagine 58 and aspartate 119 each contribute to the K(+) site. (6S)-NADPHX-binding positions include 123 to 129 (GTGLNNL) and aspartate 152. Threonine 155 provides a ligand contact to K(+).

The protein belongs to the NnrE/AIBP family. Requires K(+) as cofactor.

It catalyses the reaction (6R)-NADHX = (6S)-NADHX. It carries out the reaction (6R)-NADPHX = (6S)-NADPHX. In terms of biological role, catalyzes the epimerization of the S- and R-forms of NAD(P)HX, a damaged form of NAD(P)H that is a result of enzymatic or heat-dependent hydration. This is a prerequisite for the S-specific NAD(P)H-hydrate dehydratase to allow the repair of both epimers of NAD(P)HX. The sequence is that of NAD(P)H-hydrate epimerase from Leuconostoc sp. (strain C2).